The chain runs to 97 residues: Small ribosomal subunit protein uS19 (97 aa).

Belongs to the universal ribosomal protein uS19 family.

Protein S19 forms a complex with S13 that binds strongly to the 16S ribosomal RNA. The chain is Small ribosomal subunit protein uS19 from Pelagibacter ubique (strain HTCC1062).